Here is a 68-residue protein sequence, read N- to C-terminus: Protein SlyX homolog (68 aa).

This sequence belongs to the SlyX family.

The sequence is that of Protein SlyX homolog from Ectopseudomonas mendocina (strain ymp) (Pseudomonas mendocina).